Reading from the N-terminus, the 1849-residue chain is Protein TANC1 (1849 aa).

N-acetylmethionine is present on M1. 2 disordered regions span residues 1–47 and 59–109; these read MLKA…TTED and MSLP…FREG. The span at 8–21 shows a compositional bias: basic and acidic residues; sequence KSREGVKGSKKEAG. A compositionally biased stretch (polar residues) spans 27 to 46; sequence ETPTLSSSGDSPVNSLSTTE. Phosphoserine occurs at positions 60, 63, 64, 204, 267, and 455. Disordered stretches follow at residues 264–309 and 430–481; these read DNCS…PRPN and VASS…QRPR. Positions 451 to 468 are enriched in low complexity; it reads TPLLSPSSSTSALSAART. ANK repeat units follow at residues 886-918, 924-953, 957-986, 990-1019, 1030-1059, 1068-1097, 1101-1130, 1134-1163, 1167-1196, 1200-1229, and 1233-1262; these read EGLS…NVNY, NNAP…CLDG, NGMN…RVDH, KGQC…SAGP, ALQQ…EHEI, WGET…AVSR, RGVP…DVNP, QGRT…ALSS, EGLS…EIDQ, NGRT…VIEH, and SGMR…KLGN. 3 TPR repeats span residues 1279 to 1312, 1326 to 1359, and 1361 to 1393; these read LQKL…FPRE, VSLY…KPKS, and EAFY…CPTN. A compositionally biased stretch (low complexity) spans 1410–1421; it reads LQRNQQQKQQAP. 4 disordered regions span residues 1410–1503, 1527–1605, 1635–1711, and 1812–1849; these read LQRN…ISKS, NQHL…GESG, QGGP…PRNT, and PHLY…ESNV. Phosphoserine is present on residues S1429 and S1456. The segment covering 1447–1456 has biased composition (acidic residues); it reads EEAEEEDTSS. 2 stretches are compositionally biased toward polar residues: residues 1527 to 1546 and 1593 to 1603; these read NQHL…KVQV and PSQSLQLQRGE. Residues 1649 to 1679 are compositionally biased toward low complexity; it reads SLSSSGSSGSPSSSVKMSSSTSSLTSSSSVS. 3 positions are modified to phosphoserine: S1658, S1666, and S1667.

The protein belongs to the TANC family. Interacts probably directly with DLG1, DLG4, HOMER1. Interacts with DLGAP1, INA, CAMK2A, GRIN2B and GRIA1. Interacts with TNIK and MINK1. In terms of processing, phosphorylated; by MINK1 and TNIK upon stimulation by RAP2A. Expressed in heart, lung, liver and kidney. Expressed in brain (at protein level).

The protein localises to the postsynaptic density. May be a scaffold component in the postsynaptic density. The chain is Protein TANC1 (Tanc1) from Rattus norvegicus (Rat).